The sequence spans 285 residues: Small ribosomal subunit protein uS2 (285 aa).

The tract at residues 262–285 is disordered; that stretch reads NDDWNEDDTAPAAPGAASWGGAAF. Low complexity predominate over residues 271 to 285; it reads APAAPGAASWGGAAF.

The protein belongs to the universal ribosomal protein uS2 family. In terms of assembly, component of the small ribosomal subunit. Mature ribosomes consist of a small (40S) and a large (60S) subunit. The 40S subunit contains about 33 different proteins and 1 molecule of RNA (18S). The 60S subunit contains about 49 different proteins and 3 molecules of RNA (28S, 5.8S and 5S). Interacts with ribosomal protein S21.

It is found in the cytoplasm. In terms of biological role, required for the assembly and/or stability of the 40S ribosomal subunit. Required for the processing of the 20S rRNA-precursor to mature 18S rRNA in a late step of the maturation of 40S ribosomal subunits. This chain is Small ribosomal subunit protein uS2, found in Anopheles gambiae (African malaria mosquito).